Reading from the N-terminus, the 319-residue chain is MAAKGGTVKAASGFNAAEDAQTLRKAMKGLGTDEDAIINVLAYRSTAQRQEIRTAYKTTIGRDLMDDLKSELSGNFEQVILGMMTPTVLYDVQELRKAMKGAGTDEGCLIEILASRTPEEIRRINQTYQLQYGRSLEDDIRSDTSFMFQRVLVSLSAGGRDESNYLDDALMRQDAQDLYEAGEKKWGTDEVKFLTVLCSRNRNHLLHVFDEYKRIAQKDIEQSIKSETSGSFEDALLAIVKCMRNKSAYFAERLYKSMKGLGTDDDTLIRVMVSRAEIDMLDIRANFKRLYGKSLYSFIKGDTSGDYRKVLLILCGGDD.

Alanine 2 is subject to N-acetylalanine. Phosphothreonine is present on threonine 7. Serine 12 bears the Phosphoserine mark. 4 Annexin repeats span residues phenylalanine 14–threonine 85, proline 86–alanine 157, alanine 169–lysine 241, and asparagine 245–glycine 316. Lysine 213, lysine 293, and lysine 300 each carry N6-acetyllysine.

Belongs to the annexin family. As to quaternary structure, monomer. Binds to SFTPA1 in a Ca(2+)-dependent manner.

It localises to the zymogen granule membrane. Its function is as follows. May play a role in alveolar type II cells through interaction with the surfactant protein SFTPA1 (SP-A). The chain is Annexin A4 (ANXA4) from Bos taurus (Bovine).